Reading from the N-terminus, the 109-residue chain is U-scoloptoxin(16)-Cw1a (109 aa).

The signal sequence occupies residues Met-1 to Ala-21.

Belongs to the scoloptoxin-16 family. Post-translationally, contains 4 disulfide bonds. Expressed by the venom gland.

The protein resides in the secreted. This Cormocephalus westwoodi (Westwood's green centipede) protein is U-scoloptoxin(16)-Cw1a.